A 206-amino-acid chain; its full sequence is Uridine kinase (206 aa).

Position 9 to 16 (9 to 16 (GGSGSGKT)) interacts with ATP.

This sequence belongs to the uridine kinase family.

The protein localises to the cytoplasm. The enzyme catalyses uridine + ATP = UMP + ADP + H(+). The catalysed reaction is cytidine + ATP = CMP + ADP + H(+). It participates in pyrimidine metabolism; CTP biosynthesis via salvage pathway; CTP from cytidine: step 1/3. The protein operates within pyrimidine metabolism; UMP biosynthesis via salvage pathway; UMP from uridine: step 1/1. The polypeptide is Uridine kinase (Borrelia turicatae (strain 91E135)).